A 1141-amino-acid polypeptide reads, in one-letter code: Isoleucine--tRNA ligase (1141 aa).

The short motif at 50–60 (PSANGMPGIHH) is the 'HIGH' region element. Positions 689–693 (KMSKR) match the 'KMSKS' region motif. Residue Lys-692 participates in ATP binding.

This sequence belongs to the class-I aminoacyl-tRNA synthetase family. IleS type 2 subfamily. Monomer. Zn(2+) is required as a cofactor.

Its subcellular location is the cytoplasm. The enzyme catalyses tRNA(Ile) + L-isoleucine + ATP = L-isoleucyl-tRNA(Ile) + AMP + diphosphate. Its function is as follows. Catalyzes the attachment of isoleucine to tRNA(Ile). As IleRS can inadvertently accommodate and process structurally similar amino acids such as valine, to avoid such errors it has two additional distinct tRNA(Ile)-dependent editing activities. One activity is designated as 'pretransfer' editing and involves the hydrolysis of activated Val-AMP. The other activity is designated 'posttransfer' editing and involves deacylation of mischarged Val-tRNA(Ile). In Bacteroides fragilis (strain YCH46), this protein is Isoleucine--tRNA ligase.